Consider the following 375-residue polypeptide: Succinyl-diaminopimelate desuccinylase (375 aa).

Residue His66 participates in Zn(2+) binding. Residue Asp68 is part of the active site. Asp99 contributes to the Zn(2+) binding site. Glu133 acts as the Proton acceptor in catalysis. Zn(2+) is bound by residues Glu134, Glu162, and His348.

It belongs to the peptidase M20A family. DapE subfamily. Homodimer. Zn(2+) is required as a cofactor. Co(2+) serves as cofactor.

The catalysed reaction is N-succinyl-(2S,6S)-2,6-diaminopimelate + H2O = (2S,6S)-2,6-diaminopimelate + succinate. It functions in the pathway amino-acid biosynthesis; L-lysine biosynthesis via DAP pathway; LL-2,6-diaminopimelate from (S)-tetrahydrodipicolinate (succinylase route): step 3/3. Functionally, catalyzes the hydrolysis of N-succinyl-L,L-diaminopimelic acid (SDAP), forming succinate and LL-2,6-diaminopimelate (DAP), an intermediate involved in the bacterial biosynthesis of lysine and meso-diaminopimelic acid, an essential component of bacterial cell walls. In Escherichia coli O139:H28 (strain E24377A / ETEC), this protein is Succinyl-diaminopimelate desuccinylase.